Consider the following 458-residue polypeptide: Adenylosuccinate synthetase (458 aa).

GTP-binding positions include 17-23 (GDEGKGK) and 45-47 (GHT). The active-site Proton acceptor is Asp-18. 2 residues coordinate Mg(2+): Asp-18 and Gly-45. Residues 18–21 (DEGK), 43–46 (NAGH), Thr-137, Arg-151, Gln-247, Thr-262, and Arg-330 each bind IMP. His-46 acts as the Proton donor in catalysis. 326-332 (VTTGRSR) lines the substrate pocket. GTP contacts are provided by residues Arg-332, 358 to 360 (KLD), and 440 to 442 (STS).

Belongs to the adenylosuccinate synthetase family. As to quaternary structure, homodimer. The cofactor is Mg(2+).

The protein localises to the cytoplasm. It carries out the reaction IMP + L-aspartate + GTP = N(6)-(1,2-dicarboxyethyl)-AMP + GDP + phosphate + 2 H(+). It functions in the pathway purine metabolism; AMP biosynthesis via de novo pathway; AMP from IMP: step 1/2. Plays an important role in the de novo pathway of purine nucleotide biosynthesis. Catalyzes the first committed step in the biosynthesis of AMP from IMP. The protein is Adenylosuccinate synthetase of Acidovorax ebreus (strain TPSY) (Diaphorobacter sp. (strain TPSY)).